The sequence spans 718 residues: MFRAQATTPYDTAIAKATDENLTSEDWGAIMEVCDRVAGDDNGAKEAVQALIRRLAHRNANVQLYTLEVANALSQNCGKPMHRELASRAFTEALLKLANERNTHNQVKAKILEGTKEWSDMFKDDADLGIMYDAYYRLKQTNPQLQPPSAPQKNSLTDVDRQKEEEELQIALKLSLQEEERKKQQTPAGPSGAAGPSSSSAPDQAGTPSGQGADAGAGAAAVPLQPTGTGTTAATVSRVRALYDFVPSEDGELEFKKGDVIAVLESVYKDWWRGSLKGKTGIFPLNYVEKLADPTPDELQREAQMEAEVFSEIKNVEKLLTLLSTSSKDEDSEEIAKLYQQTSAIRPKLIKLIEKYSQKKDDFTQLNEKFIKARRDYEALLETSMSHPPQPSYHQYAVRPQGYGGSPTPYPTQGPPQQDPQRFYPPGPHPDQYPPSSPSPHLQRPGGTPGPGAQAPFYVAGAEVPSHGGPHPNQNFPPRDPGQRIPSAGKQPARLQTQQASSSPPPSAPYAAYSQPPAQQGSYGNPQELSTSAYDSPVASHPHPNPLGSNAPFAPATYPAEERYGTPSAAPAPLNPGGGQQQPYQYNSYQNQTPPQPANTQPPQGGMYSGQGYNDSSDAVGNVPPQPTSAAPPPPVPGSQRVHSPVYGGPPGAADSRFSLPSRMGPGAPSAPLGGPSSPGEQPQYKAYVPPGSSGPSAPSAPSVPADYYRQPGGTANY.

Residues 17–146 (ATDENLTSED…RLKQTNPQLQ (130 aa)) enclose the VHS domain. Disordered regions lie at residues 142–164 (NPQL…RQKE) and 178–230 (EEER…TGTG). The UIM domain occupies 163–182 (KEEEELQIALKLSLQEEERK). Low complexity-rich tracts occupy residues 187 to 202 (PAGP…SSAP) and 210 to 221 (GQGADAGAGAAA). In terms of domain architecture, SH3 spans 234–293 (ATVSRVRALYDFVPSEDGELEFKKGDVIAVLESVYKDWWRGSLKGKTGIFPLNYVEKLAD). The disordered stretch occupies residues 384–718 (SMSHPPQPSY…YRQPGGTANY (335 aa)). A compositionally biased stretch (pro residues) spans 408-438 (TPYPTQGPPQQDPQRFYPPGPHPDQYPPSSP). A compositionally biased stretch (low complexity) spans 509 to 520 (PYAAYSQPPAQQ). Positions 521 to 534 (GSYGNPQELSTSAY) are enriched in polar residues. Residues 581–604 (QQPYQYNSYQNQTPPQPANTQPPQ) are compositionally biased toward low complexity. The segment covering 624–637 (PPQPTSAAPPPPVP) has biased composition (pro residues). Low complexity-rich tracts occupy residues 665 to 680 (GPGA…SSPG) and 689 to 706 (VPPG…SVPA).

The protein belongs to the STAM family. In terms of assembly, component of the ESCRT-0 complex composed of HSE1 and VPS27.

The protein resides in the endosome membrane. In terms of biological role, component of the ESCRT-0 complex which is the sorting receptor for ubiquitinated cargo proteins at the multivesicular body (MVB). This is Class E vacuolar protein-sorting machinery protein HSE1 (HSE1) from Pyricularia oryzae (strain 70-15 / ATCC MYA-4617 / FGSC 8958) (Rice blast fungus).